Reading from the N-terminus, the 217-residue chain is Thymidylate kinase (217 aa).

7–14 contacts ATP; the sequence is GIDGAGKS.

It belongs to the thymidylate kinase family.

The enzyme catalyses dTMP + ATP = dTDP + ADP. Its function is as follows. Phosphorylation of dTMP to form dTDP in both de novo and salvage pathways of dTTP synthesis. The chain is Thymidylate kinase from Chlorobaculum parvum (strain DSM 263 / NCIMB 8327) (Chlorobium vibrioforme subsp. thiosulfatophilum).